The sequence spans 207 residues: Ribosomal RNA large subunit methyltransferase E (207 aa).

5 residues coordinate S-adenosyl-L-methionine: glycine 60, tryptophan 62, aspartate 80, aspartate 96, and aspartate 121. The active-site Proton acceptor is the lysine 161.

The protein belongs to the class I-like SAM-binding methyltransferase superfamily. RNA methyltransferase RlmE family.

The protein localises to the cytoplasm. It carries out the reaction uridine(2552) in 23S rRNA + S-adenosyl-L-methionine = 2'-O-methyluridine(2552) in 23S rRNA + S-adenosyl-L-homocysteine + H(+). In terms of biological role, specifically methylates the uridine in position 2552 of 23S rRNA at the 2'-O position of the ribose in the fully assembled 50S ribosomal subunit. The polypeptide is Ribosomal RNA large subunit methyltransferase E (Pseudomonas paraeruginosa (strain DSM 24068 / PA7) (Pseudomonas aeruginosa (strain PA7))).